The chain runs to 111 residues: UPF0145 protein RBAM_010660 (111 aa).

This sequence belongs to the UPF0145 family.

The polypeptide is UPF0145 protein RBAM_010660 (Bacillus velezensis (strain DSM 23117 / BGSC 10A6 / LMG 26770 / FZB42) (Bacillus amyloliquefaciens subsp. plantarum)).